The primary structure comprises 232 residues: MSLTDTIRNTFVPIHREGYPFIAGFFVVSLILGWLWDPLFWIGMVLTVWCIYFYRDPERVTPMDDDLVISPADGKVSFVGLAVPPAELDLGYEPMTRVSVFMNVFSVHINRSPVRGKIDKVVHRPGKFLNAELDKASTENERNSVLIESPHGKIGVVQIAGLVARRIVCWSNQDDELSVGERFGLIRFGSRVDVYLPSDATVRVAVGQTAIAGETVLADYGTERGEPVVRIA.

Ser190 serves as the catalytic Schiff-base intermediate with substrate; via pyruvic acid. At Ser190 the chain carries Pyruvic acid (Ser); by autocatalysis.

This sequence belongs to the phosphatidylserine decarboxylase family. PSD-A subfamily. As to quaternary structure, heterodimer of a large membrane-associated beta subunit and a small pyruvoyl-containing alpha subunit. It depends on pyruvate as a cofactor. In terms of processing, is synthesized initially as an inactive proenzyme. Formation of the active enzyme involves a self-maturation process in which the active site pyruvoyl group is generated from an internal serine residue via an autocatalytic post-translational modification. Two non-identical subunits are generated from the proenzyme in this reaction, and the pyruvate is formed at the N-terminus of the alpha chain, which is derived from the carboxyl end of the proenzyme. The post-translation cleavage follows an unusual pathway, termed non-hydrolytic serinolysis, in which the side chain hydroxyl group of the serine supplies its oxygen atom to form the C-terminus of the beta chain, while the remainder of the serine residue undergoes an oxidative deamination to produce ammonia and the pyruvoyl prosthetic group on the alpha chain.

It is found in the cell membrane. The catalysed reaction is a 1,2-diacyl-sn-glycero-3-phospho-L-serine + H(+) = a 1,2-diacyl-sn-glycero-3-phosphoethanolamine + CO2. The protein operates within phospholipid metabolism; phosphatidylethanolamine biosynthesis; phosphatidylethanolamine from CDP-diacylglycerol: step 2/2. Its function is as follows. Catalyzes the formation of phosphatidylethanolamine (PtdEtn) from phosphatidylserine (PtdSer). In Brucella abortus (strain S19), this protein is Phosphatidylserine decarboxylase proenzyme.